Here is a 294-residue protein sequence, read N- to C-terminus: Glycine N-acyltransferase-like protein 2 (294 aa).

The residue at position 19 (Lys19) is an N6-acetyllysine.

The protein belongs to the glycine N-acyltransferase family. Acetylation at Lys-19 drastically decreases the production of N-oleoyl and N-arachidonoyl glycines. As to expression, expressed at highest levels in salivary gland and trachea. Also detected in thyroid gland, spinal cord, prostate, lung and fetal brain.

Its subcellular location is the endoplasmic reticulum. It catalyses the reaction an acyl-CoA + glycine = an N-acylglycine + CoA + H(+). The enzyme catalyses (9Z)-hexadecenoyl-CoA + glycine = N-(9Z-hexadecenoyl)-glycine + CoA + H(+). The catalysed reaction is octadecanoyl-CoA + glycine = N-octadecanoylglycine + CoA + H(+). It carries out the reaction (5Z,8Z,11Z,14Z)-eicosatetraenoyl-CoA + glycine = N-(5Z,8Z,11Z,14Z)-eicosatetraenoyl-glycine + CoA + H(+). It catalyses the reaction (9Z)-octadecenoyl-CoA + glycine = N-(9Z-octadecenoyl)glycine + CoA + H(+). The enzyme catalyses octanoyl-CoA + glycine = N-octanoylglycine + CoA + H(+). The catalysed reaction is decanoyl-CoA + glycine = N-decanoylglycine + CoA + H(+). It carries out the reaction tetradecanoyl-CoA + glycine = N-tetradecanoylglycine + CoA + H(+). It catalyses the reaction dodecanoyl-CoA + glycine = N-dodecanoylglycine + CoA + H(+). The enzyme catalyses (9Z,12Z)-octadecadienoyl-CoA + glycine = N-(9Z,12Z-octadecadienoyl)-glycine + CoA + H(+). The catalysed reaction is a fatty acyl-CoA + glycine = an N-(fatty acyl)-glycine + CoA + H(+). Mitochondrial acyltransferase which transfers the acyl group to the N-terminus of glycine. Conjugates numerous substrates, such as arachidonoyl-CoA and saturated medium and long-chain acyl-CoAs ranging from chain-length C8:0-CoA to C18:0-CoA, to form a variety of N-acylglycines. Shows a preference for monounsaturated fatty acid oleoyl-CoA (C18:1-CoA) as an acyl donor. Does not exhibit any activity toward C22:6-CoA and chenodeoxycholoyl-CoA, nor toward serine or alanine. This chain is Glycine N-acyltransferase-like protein 2, found in Homo sapiens (Human).